The chain runs to 621 residues: Amino-acid acetyltransferase, mitochondrial (621 aa).

The N-terminal 77 residues, 1 to 77 (MIPRAPPSTQ…RSYLASFGVQ (77 aa)), are a transit peptide targeting the mitochondrion. The tract at residues 213-233 (PKPGSEEESEPGFSPPETHIY) is disordered. One can recognise an N-acetyltransferase domain in the interval 424–600 (LPIRVVRSVS…GSAGLSFIED (177 aa)).

The protein belongs to the acetyltransferase family.

The protein resides in the mitochondrion. The catalysed reaction is L-glutamate + acetyl-CoA = N-acetyl-L-glutamate + CoA + H(+). It functions in the pathway amino-acid biosynthesis; L-arginine biosynthesis; N(2)-acetyl-L-ornithine from L-glutamate: step 1/4. Functionally, N-acetylglutamate synthase involved in arginine biosynthesis. The polypeptide is Amino-acid acetyltransferase, mitochondrial (ARG2) (Coprinopsis cinerea (strain Okayama-7 / 130 / ATCC MYA-4618 / FGSC 9003) (Inky cap fungus)).